Here is a 416-residue protein sequence, read N- to C-terminus: UDP-N-acetylglucosamine 1-carboxyvinyltransferase (416 aa).

22 to 23 (KN) serves as a coordination point for phosphoenolpyruvate. Arg92 is a UDP-N-acetyl-alpha-D-glucosamine binding site. Cys116 (proton donor) is an active-site residue. Residue Cys116 is modified to 2-(S-cysteinyl)pyruvic acid O-phosphothioketal. Residues 121-125 (RPVDQ), Asp304, and Ile326 each bind UDP-N-acetyl-alpha-D-glucosamine.

It belongs to the EPSP synthase family. MurA subfamily.

Its subcellular location is the cytoplasm. The enzyme catalyses phosphoenolpyruvate + UDP-N-acetyl-alpha-D-glucosamine = UDP-N-acetyl-3-O-(1-carboxyvinyl)-alpha-D-glucosamine + phosphate. It functions in the pathway cell wall biogenesis; peptidoglycan biosynthesis. Functionally, cell wall formation. Adds enolpyruvyl to UDP-N-acetylglucosamine. This Cupriavidus pinatubonensis (strain JMP 134 / LMG 1197) (Cupriavidus necator (strain JMP 134)) protein is UDP-N-acetylglucosamine 1-carboxyvinyltransferase.